A 334-amino-acid polypeptide reads, in one-letter code: Ferredoxin--NADP reductase (334 aa).

Residues D33, Q41, Y46, A86, F120, D286, and T327 each coordinate FAD.

This sequence belongs to the ferredoxin--NADP reductase type 2 family. Homodimer. Requires FAD as cofactor.

It carries out the reaction 2 reduced [2Fe-2S]-[ferredoxin] + NADP(+) + H(+) = 2 oxidized [2Fe-2S]-[ferredoxin] + NADPH. This Rickettsia prowazekii (strain Madrid E) protein is Ferredoxin--NADP reductase.